The primary structure comprises 432 residues: Anaerobic glycerol-3-phosphate dehydrogenase subunit B (432 aa).

It belongs to the anaerobic G-3-P dehydrogenase subunit B family. In terms of assembly, composed of a catalytic GlpA/B dimer and of membrane bound GlpC. Requires FMN as cofactor.

It catalyses the reaction a quinone + sn-glycerol 3-phosphate = dihydroxyacetone phosphate + a quinol. Its pathway is polyol metabolism; glycerol degradation via glycerol kinase pathway; glycerone phosphate from sn-glycerol 3-phosphate (anaerobic route): step 1/1. In terms of biological role, conversion of glycerol 3-phosphate to dihydroxyacetone. Uses fumarate or nitrate as electron acceptor. The sequence is that of Anaerobic glycerol-3-phosphate dehydrogenase subunit B from Histophilus somni (strain 129Pt) (Haemophilus somnus).